The primary structure comprises 303 residues: Probable cell division protein WhiA (303 aa).

The H-T-H motif DNA-binding region spans 272–303; sequence SIQQIADSIEPPLTKSGVNHRLRKINKIADDL.

It belongs to the WhiA family.

Its function is as follows. Involved in cell division and chromosome segregation. The polypeptide is Probable cell division protein WhiA (Streptococcus thermophilus (strain ATCC BAA-250 / LMG 18311)).